The chain runs to 139 residues: Histone H2B (139 aa).

Over residues 1–37 the composition is skewed to low complexity; sequence MAPKSVASKAPASQASKAPAAASKAPAKAAKTSAAPK. The disordered stretch occupies residues 1-48; it reads MAPKSVASKAPASQASKAPAAASKAPAKAAKTSAAPKDGAKKRSKKRV. K9 is modified (N6-acetyllysine; alternate). K9 participates in a covalent cross-link: Glycyl lysine isopeptide (Lys-Gly) (interchain with G-Cter in SUMO); alternate. Residue S13 is modified to Phosphoserine. At K17 the chain carries N6-acetyllysine. Residue K134 forms a Glycyl lysine isopeptide (Lys-Gly) (interchain with G-Cter in ubiquitin) linkage.

This sequence belongs to the histone H2B family. As to quaternary structure, the nucleosome is a histone octamer containing two molecules each of H2A, H2B, H3 and H4 assembled in one H3-H4 heterotetramer and two H2A-H2B heterodimers. The octamer wraps approximately 147 bp of DNA. Post-translationally, monoubiquitinated by the UBC2-BRE1 complex to form H2BK123ub1. H2BK123ub1 gives a specific tag for epigenetic transcriptional activation and is also prerequisite for H3K4me and H3K79me formation. H2BK123ub1 also modulates the formation of double-strand breaks during meiosis and is a prerequisite for DNA-damage checkpoint activation. In terms of processing, phosphorylated to form H2BS10ph during progression through meiotic prophase. May be correlated with chromosome condensation. Acetylation of N-terminal lysines and particularly formation of H2BK11ac has a positive effect on transcription. Post-translationally, sumoylation to form H2BK6su occurs preferentially near the telomeres and represses gene transcription.

It is found in the nucleus. Its subcellular location is the chromosome. Functionally, core component of nucleosome. Nucleosomes wrap and compact DNA into chromatin, limiting DNA accessibility to the cellular machineries which require DNA as a template. Histones thereby play a central role in transcription regulation, DNA repair, DNA replication and chromosomal stability. DNA accessibility is regulated via a complex set of post-translational modifications of histones, also called histone code, and nucleosome remodeling. The polypeptide is Histone H2B (HTB1) (Cryptococcus neoformans var. neoformans serotype D (strain B-3501A) (Filobasidiella neoformans)).